Consider the following 248-residue polypeptide: Neurovirulence factor ICP34.5 (248 aa).

Basic residues predominate over residues 1–14 (MARRRRHRGPRRPR). Positions 1–16 (MARRRRHRGPRRPRPP) are required for nucleolar localization. 2 disordered regions span residues 1–129 (MARR…FRLP) and 149–174 (RRAG…TPAT). A compositionally biased stretch (polar residues) spans 24 to 35 (TAQSQVTSTPNS). A compositionally biased stretch (pro residues) spans 45–58 (AAPPPPPAGGPPPS). Residues 73–83 (ASDDDDDDDWP) show a composition bias toward acidic residues. Composition is skewed to pro residues over residues 84–93 (DSPPPEPAPE) and 119–128 (SHPPSRPFRL). The short motif at 128–137 (LPPRLALRLR) is the Nuclear export signal element. 5 consecutive repeat copies span residues 161-163 (ATP), 164-166 (ATP), 167-169 (ATP), 170-172 (ATP), and 173-175 (ATP). The interval 161 to 175 (ATPATPATPATPATP) is 5 X 3 AA tandem repeats of A-T-P. Residues 164–174 (ATPATPATPAT) show a composition bias toward low complexity. The binding to PP1CA stretch occupies residues 175-188 (PARVRFSPHVRVRH). The tract at residues 175–188 (PARVRFSPHVRVRH) is interaction with host PPP1CA. The important for interferon resistance stretch occupies residues 190–248 (VVWASAARLARRGSWARERADRARFRRRVAEAEAVIGPCLGPEARARALARGAGPANSV). The Bipartite nuclear localization signal motif lies at 200-218 (RRGSWARERADRARFRRRV). The interaction with host EIF2S1/EIF-2ALPHA stretch occupies residues 218-233 (VAEAEAVIGPCLGPEA).

It belongs to the PPP1R15 family. In terms of assembly, interacts with host PPP1CA; this interaction forms a high-molecular-weight complex that dephosphorylates EIF2S1/eIF-2alpha. Interacts with host EIF2S1/eIF-2alpha; this interaction is crucial for the specific dephosphorylation of EIF2S1/eIF-2alpha by PPP1CA. Binds to proliferating cell nuclear antigen (PCNA), which may release host cells from growth arrest and facilitate viral replication. Interacts (via N-terminus) with host C1QBP; this interaction allows C1QBP to be recruited to the inner nuclear membrane by ICP34.5. Interacts with host PRKCA. Interacts with protein UL31. Interacts with host STING/TMEM173; this interaction inhibits the intracellular DNA sensing pathway. Interacts with host BECN1; this interaction modulates host autophagy.

Its subcellular location is the host cytoplasm. The protein localises to the host nucleus. It is found in the host nucleolus. It localises to the virion. Functionally, inhibits the establishment of the immune response and of the integrated stress response (ISR) in the infected cell. Plays essential roles in viral nuclear egress to mediate capsid transit across the nuclear membrane. Facilitates nuclear egress cooperatively with host C1QBP and protein kinase C/PKC to induce lamin A/C phosphorylation and subsequent reorganization. In turn, lamina disassembles and nuclear egress occurs. Recruits the serine/threonine protein phosphatase PPP1CA/PP1-alpha to dephosphorylate the translation initiation factor EIF2S1/eIF-2alpha, thereby couteracting the host shutoff of protein synthesis involving double-stranded RNA-dependent protein kinase EIF2AK2/PKR. In turn, controls host IRF3 activation and subsequently inhibits host interferon response. Controls the DNA sensing pathway by interacting with and inhibiting host STING/TMEM173. Also down-modulates the host MHC class II proteins cell surface expression. Acts as a neurovirulence factor that has a profound effect on the growth of the virus in central nervous system tissue, by interacting with host BECN1 and thereby antagonizing the host autophagy response. This chain is Neurovirulence factor ICP34.5 (ICP34.5), found in Homo sapiens (Human).